A 138-amino-acid chain; its full sequence is Probable lactoylglutathione lyase (138 aa).

The region spanning 5–129 (RILHTMLRVG…DGYMIELIQN (125 aa)) is the VOC domain. A Ni(2+)-binding site is contributed by histidine 8. Arginine 12 contributes to the substrate binding site. Glutamate 59 serves as a coordination point for Ni(2+). Substrate-binding residues include asparagine 63 and histidine 77. The Ni(2+) site is built by histidine 77 and glutamate 125. Residue glutamate 125 is the Proton donor/acceptor of the active site.

The protein belongs to the glyoxalase I family. The cofactor is Ni(2+).

It catalyses the reaction (R)-S-lactoylglutathione = methylglyoxal + glutathione. Its pathway is secondary metabolite metabolism; methylglyoxal degradation; (R)-lactate from methylglyoxal: step 1/2. Its function is as follows. Catalyzes the conversion of hemimercaptal, formed from methylglyoxal and glutathione, to S-lactoylglutathione. The sequence is that of Probable lactoylglutathione lyase (gloA) from Vibrio parahaemolyticus serotype O3:K6 (strain RIMD 2210633).